Here is a 469-residue protein sequence, read N- to C-terminus: Transcription factor E2FB (469 aa).

Disordered regions lie at residues 1 to 28 (MSEE…PPLV) and 84 to 118 (QTPV…AGSP). Polar residues-rich tracts occupy residues 8-22 (QFPS…SLSS) and 100-118 (SAKS…AGSP). Residues 129-194 (RYDSSLGLLT…TLKNRIQWKG (66 aa)) mediate DNA binding. Residues 202-246 (ETIESIANLQDEVQNLAAEEARLDDQIRESQERLTSLSEDENNKR) adopt a coiled-coil conformation. The leucine-zipper stretch occupies residues 210-238 (LQDEVQNLAAEEARLDDQIRESQERLTSL). The interval 319–374 (PQADEPSNVPDEPSNVPDVPSNLPSTSGLPENHDVSMPMKEESTERNMETQEVDDT) is disordered. Residues 349–374 (ENHDVSMPMKEESTERNMETQEVDDT) show a composition bias toward basic and acidic residues. The retinoblastoma protein binding stretch occupies residues 403 to 419 (DYWFRSEVGEVSITDMW). The disordered stretch occupies residues 426–469 (DWNQMITFDQDHAGPSDNKILEQPQTPSSPTPEESTATRSPTGS). Residues 447–469 (EQPQTPSSPTPEESTATRSPTGS) are compositionally biased toward low complexity.

The protein belongs to the E2F/DP family. Heterodimer with DP proteins. Interacts (via dimerization domain) preferentially with DPA, but also with DPB. Interacts with PURA1 and retinoblastoma-related protein RBR1. Component of a DREAM-like complex which modulates a variety of developmentally regulated genes and of the mitotic genes in proliferating and differentiated cells. Interacts with MYB3R4 only at early stages of leaves development. In terms of processing, phosphorylated. In terms of tissue distribution, expressed in proliferating cells and several differentiated tissues. Detected in inflorescence and shoot apical meristems, cotyledonary vascular tissues, leaf primordia, young leaves, base of trichomes, central cylinder and elongation zone of roots, lateral root primordia, flowers, pistils of immature flowers and pollen grains.

The protein resides in the cytoplasm. It is found in the nucleus. Its function is as follows. Transcription activator that binds DNA cooperatively with DP proteins through the E2 recognition site, 5'-TTTC[CG]CGC-3' found in the promoter region of a number of genes whose products are involved in cell cycle regulation or in DNA replication. The binding of retinoblastoma-related proteins represses transactivation. Involved in the control of cell-cycle progression from G1 to S phase and from G2 to M phase. Stimulates cell proliferation and delays differentiation. Represses cell enlargement and endoreduplication in auxin-free conditions. The chain is Transcription factor E2FB (E2FB) from Arabidopsis thaliana (Mouse-ear cress).